We begin with the raw amino-acid sequence, 588 residues long: Calcium/calmodulin-dependent protein kinase kinase 2 (588 aa).

Polar residues predominate over residues 1-11 (MSSCVSSQPTS). Disordered regions lie at residues 1 to 34 (MSSC…KPCE) and 64 to 147 (DLNL…PTVE). S2 carries the post-translational modification N-acetylserine. 5 positions are modified to phosphoserine: S99, S114, S129, S133, and S137. Residues 101–116 (QEPSQGGPASSSNSLD) are compositionally biased toward polar residues. Residues 124-139 (PSLSYSPASSPQSSPR) show a composition bias toward low complexity. The 282-residue stretch at 165–446 (YTLKDEIGKG…VPEIKLHPWV (282 aa)) folds into the Protein kinase domain. ATP-binding positions include 171-179 (IGKGSYGVV) and K194. Positions 204–226 (QAGFPRRPPPRGARPAPGGCIQP) are RP domain. A disordered region spans residues 205–225 (AGFPRRPPPRGARPAPGGCIQ). The Proton acceptor role is filled by D312. The interval 472-477 (ENSVKH) is autoinhibitory domain. The calmodulin-binding stretch occupies residues 475 to 500 (VKHIPSLATVILVKTMIRKRSFGNPF). Residues S495, S511, T522, and S572 each carry the phosphoserine modification. The disordered stretch occupies residues 497–588 (GNPFEGSRRE…LQPEEVMEPE (92 aa)). Residues 521-536 (PTREWEPLSEPKEARQ) show a composition bias toward basic and acidic residues. A compositionally biased stretch (pro residues) spans 570-580 (PGSPPRMPPLQ).

It belongs to the protein kinase superfamily. Ser/Thr protein kinase family. Interacts with calmodulin. Autophosphorylated and phosphorylated by PKA. Each isoform may show a different pattern of phosphorylation. As to expression, expressed in all tissues tested. A differential expression pattern compared to CAMKK1 is observed in the brain.

The protein resides in the nucleus. It is found in the cytoplasm. The protein localises to the cell projection. It localises to the neuron projection. It carries out the reaction L-seryl-[protein] + ATP = O-phospho-L-seryl-[protein] + ADP + H(+). The catalysed reaction is L-threonyl-[protein] + ATP = O-phospho-L-threonyl-[protein] + ADP + H(+). Its activity is regulated as follows. Activated by Ca(2+)/calmodulin. Binding of calmodulin may relieve intrasteric autoinhibition. Autophosphorylation does not alter activity or regulation by Ca(2+)/calmodulin. In part, activity is independent on Ca(2+)/calmodulin. Functionally, calcium/calmodulin-dependent protein kinase belonging to a proposed calcium-triggered signaling cascade involved in a number of cellular processes. Phosphorylates CAMK1, CAMK4 and CAMK1D. Efficiently phosphorylates 5'-AMP-activated protein kinase (AMPK) trimer, including that consisting of PRKAA1, PRKAB1 and PRKAG1. This phosphorylation is stimulated in response to Ca(2+) signals. May play a role in neurite growth. Isoform 2 may promote neurite elongation, while isoform 1 may promoter neurite branching. May be involved in hippocampal activation of CREB1. The chain is Calcium/calmodulin-dependent protein kinase kinase 2 (Camkk2) from Mus musculus (Mouse).